Here is a 345-residue protein sequence, read N- to C-terminus: UDP-N-acetylenolpyruvoylglucosamine reductase (345 aa).

The FAD-binding PCMH-type domain occupies 27 to 197 (FDASAELAYE…TKVVFKLPKQ (171 aa)). Arginine 174 is an active-site residue. Serine 245 (proton donor) is an active-site residue. Glutamate 341 is an active-site residue.

This sequence belongs to the MurB family. FAD is required as a cofactor.

The protein localises to the cytoplasm. The enzyme catalyses UDP-N-acetyl-alpha-D-muramate + NADP(+) = UDP-N-acetyl-3-O-(1-carboxyvinyl)-alpha-D-glucosamine + NADPH + H(+). Its pathway is cell wall biogenesis; peptidoglycan biosynthesis. Its function is as follows. Cell wall formation. In Polynucleobacter asymbioticus (strain DSM 18221 / CIP 109841 / QLW-P1DMWA-1) (Polynucleobacter necessarius subsp. asymbioticus), this protein is UDP-N-acetylenolpyruvoylglucosamine reductase.